A 195-amino-acid chain; its full sequence is PAP fimbrial minor pilin protein (195 aa).

The N-terminal stretch at 1–22 (MRLRFSVPLFFFGCVFVHGVFA) is a signal peptide. Cys-58 and Cys-97 form a disulfide bridge.

Belongs to the fimbrial protein family.

The protein resides in the secreted. It localises to the fimbrium. In terms of biological role, fimbriae (also called pili), polar filaments radiating from the surface of the bacterium to a length of 0.5-1.5 micrometers and numbering 100-300 per cell, enable bacteria to colonize the epithelium of specific host organs. Its function is as follows. PapH seems to anchor the pilus to the bacterial cell. In addition the stoichiometric relationship between PapH and PapA determines the pilus length. The polypeptide is PAP fimbrial minor pilin protein (papH) (Escherichia coli).